Consider the following 245-residue polypeptide: MLIVLPPSETKTHGGSGKPLDFHHLSFPSLTKARQTILADLQALEVDEALKVLGISEKLRPEAESNRALETNPTMPAIFRYSGVLYDALDAATLPEKALERLAIGSALFGVIHATDPIPHYRLSGGTKLPTKSGELPTMKARWGTSISEALIDVNQLVIDLRSGTYQQLGRVKDAVTVRVESVMEDGSRKVVSHFNKHYKGEFARVLALSEKEARTAEDVMSIAQAAGLVVEENPNHKETLTLVV.

This sequence belongs to the UPF0246 family.

The chain is UPF0246 protein cgR_1824 from Corynebacterium glutamicum (strain R).